Reading from the N-terminus, the 1391-residue chain is Nuclear pore complex protein Nup155 (1391 aa).

Serine 526 carries an O-linked (GlcNAc) serine glycan. 2 disordered regions span residues 604–630 (SSSPVPSGSPYPNPSSLGTPSHGAQPP) and 985–1012 (QSKAAPQSPSVPKKPGPPVLSSDPNMLS). Serine 1057 carries the phosphoserine modification.

Belongs to the non-repetitive/WGA-negative nucleoporin family. In terms of assembly, interacts with GLE1 and NUP35/NUP53. Able to form a heterotrimer with GLE1 and NUP42 in vitro. Forms a complex with NUP35, NUP93, NUP205 and lamin B. Phosphorylated. Phosphorylation and dephosphorylation may be important for the function of NUP155 and may play a role in the reversible disassembly of the nuclear pore complex during mitosis. In terms of processing, disulfide-linked to NUP62. The inner channel of the NPC has a different redox environment from the cytoplasm and allows the formation of interchain disulfide bonds between some nucleoporins, the significant increase of these linkages upon oxidative stress reduces the permeability of the NPC.

It is found in the nucleus. The protein resides in the nuclear pore complex. It localises to the nucleus membrane. Essential component of nuclear pore complex. Could be essessential for embryogenesis. Nucleoporins may be involved both in binding and translocating proteins during nucleocytoplasmic transport. This is Nuclear pore complex protein Nup155 (Nup155) from Mus musculus (Mouse).